A 424-amino-acid chain; its full sequence is MVRYSLRKAHEYARDGENQEVLGEISQAIMYYGLAKSQFEKICQNTAQPLIKRCANNQIEELMVRIRELRESLPNKQTPISMSMSTRLSPMYTSSLTPRFTSNSMVLPGDHNTTVRLKPSFREALMEDSEDDLYQMYSKFEMQVKKLSTNYGLAVAFSIVPMDDDQPSPSIFSSDESFLIVEGDDFSLGNSVEEDANATSKEDPAYQNTNEQIQPLSNFDISQQEYLNNTRIPYENEDLHLQHITQGTTDDNNVSKFLIPSYNDAKELSEEEMGRSHKREESFKRAFGHASSSESSIGEITDSREDIQSNRLVNGSWENNDFTKEINNNFPDRSETPTLQTIEAPTKLMKYTRRKSLFRFPFFRSISGKKKEEPMESGTDSLESSTAQITVDSQLKIKQLETQIATLQKQLEQFQTSTLDQDLH.

A coiled-coil region spans residues 50–78 (LIKRCANNQIEELMVRIRELRESLPNKQT). The segment at 73–212 (LPNKQTPISM…DPAYQNTNEQ (140 aa)) is required for interaction with atg8. The AIM signature appears at 178–181 (FLIV). Residues 268 to 284 (LSEEEMGRSHKREESFK) show a composition bias toward basic and acidic residues. Residues 268–299 (LSEEEMGRSHKREESFKRAFGHASSSESSIGE) are disordered. A coiled-coil region spans residues 390–420 (TVDSQLKIKQLETQIATLQKQLEQFQTSTLD).

The protein belongs to the ATG38 family. Component of the autophagy-specific vps34 PI3-kinase complex I composed of vps15, atg6, pik3/vps34, atg14 and atg38. Interacts (via AIM motif) with atg8; the interaction is direct and leads to recruitment of the autophagy-specific vps34 PI3-kinase complex I to the phagophore assembly site.

Its subcellular location is the preautophagosomal structure membrane. The protein resides in the cytoplasm. It localises to the cytosol. Functionally, functions as a part of the autophagy-specific VPS34 PI3-kinase complex I that plays a role in autophagosome assembly. This complex is essential to recruit the atg8-phosphatidylinositol conjugate and the atg12-atg5 conjugate to the pre-autophagosomal structure. By binding to atg8 at the phagophore assembly site, atg38 helps establish a positive feedback loop for recruitment of phagophore assembly proteins, including atg8. In Schizosaccharomyces pombe (strain 972 / ATCC 24843) (Fission yeast), this protein is PtdIns3K complex I subunit atg38.